Consider the following 106-residue polypeptide: Large ribosomal subunit protein bL21 (106 aa).

This sequence belongs to the bacterial ribosomal protein bL21 family. In terms of assembly, part of the 50S ribosomal subunit. Contacts protein L20.

Its function is as follows. This protein binds to 23S rRNA in the presence of protein L20. The sequence is that of Large ribosomal subunit protein bL21 from Chlamydia felis (strain Fe/C-56) (Chlamydophila felis).